The primary structure comprises 286 residues: 4-hydroxybenzoate octaprenyltransferase (286 aa).

The next 7 helical transmembrane spans lie at 20-40 (IGIL…ADGM), 43-63 (PMIL…GCAI), 83-103 (LATG…LSLC), 135-155 (FFAM…PMAF), 160-180 (GTVP…VIAY), 209-229 (VAGI…AGIL), and 234-254 (IWFY…YTMI).

This sequence belongs to the UbiA prenyltransferase family. Mg(2+) is required as a cofactor.

It is found in the cell inner membrane. The enzyme catalyses all-trans-octaprenyl diphosphate + 4-hydroxybenzoate = 4-hydroxy-3-(all-trans-octaprenyl)benzoate + diphosphate. It functions in the pathway cofactor biosynthesis; ubiquinone biosynthesis. Catalyzes the prenylation of para-hydroxybenzoate (PHB) with an all-trans polyprenyl group. Mediates the second step in the final reaction sequence of ubiquinone-8 (UQ-8) biosynthesis, which is the condensation of the polyisoprenoid side chain with PHB, generating the first membrane-bound Q intermediate 3-octaprenyl-4-hydroxybenzoate. This is 4-hydroxybenzoate octaprenyltransferase from Nitrosomonas eutropha (strain DSM 101675 / C91 / Nm57).